A 271-amino-acid polypeptide reads, in one-letter code: Pyrroline-5-carboxylate reductase (271 aa).

It belongs to the pyrroline-5-carboxylate reductase family.

The protein resides in the cytoplasm. It carries out the reaction L-proline + NADP(+) = (S)-1-pyrroline-5-carboxylate + NADPH + 2 H(+). The enzyme catalyses L-proline + NAD(+) = (S)-1-pyrroline-5-carboxylate + NADH + 2 H(+). Its pathway is amino-acid biosynthesis; L-proline biosynthesis; L-proline from L-glutamate 5-semialdehyde: step 1/1. Catalyzes the reduction of 1-pyrroline-5-carboxylate (PCA) to L-proline. The protein is Pyrroline-5-carboxylate reductase of Staphylococcus aureus (strain COL).